Reading from the N-terminus, the 941-residue chain is Cell wall protein IFF9 (941 aa).

A signal peptide spans 1–20; sequence MQLFQNILVSIALLTQIVFA. Asn917 carries GPI-anchor amidated asparagine lipidation. Positions 918-941 are cleaved as a propeptide — removed in mature form; sequence GSNKESIENIKYLALVVFGLMMFM.

The protein belongs to the HYR1/IFF family. In terms of processing, the GPI-anchor is attached to the protein in the endoplasmic reticulum and serves to target the protein to the cell surface. There, the glucosamine-inositol phospholipid moiety is cleaved off and the GPI-modified mannoprotein is covalently attached via its lipidless GPI glycan remnant to the 1,6-beta-glucan of the outer cell wall layer.

It is found in the secreted. The protein localises to the cell wall. It localises to the membrane. Functionally, GPI-anchored cell wall protein involved in cell wall organization, hyphal growth, as well as in host-fungal interaction and virulence. The protein is Cell wall protein IFF9 (IFF9) of Candida albicans (strain SC5314 / ATCC MYA-2876) (Yeast).